Reading from the N-terminus, the 486-residue chain is Protein nucleotidyltransferase YdiU (486 aa).

ATP-binding residues include G90, G92, R93, K113, D125, G126, R176, and R183. D252 functions as the Proton acceptor in the catalytic mechanism. Residues N253 and D262 each contribute to the Mg(2+) site. D262 is an ATP binding site.

Belongs to the SELO family. Requires Mg(2+) as cofactor. Mn(2+) serves as cofactor.

The enzyme catalyses L-seryl-[protein] + ATP = 3-O-(5'-adenylyl)-L-seryl-[protein] + diphosphate. The catalysed reaction is L-threonyl-[protein] + ATP = 3-O-(5'-adenylyl)-L-threonyl-[protein] + diphosphate. It carries out the reaction L-tyrosyl-[protein] + ATP = O-(5'-adenylyl)-L-tyrosyl-[protein] + diphosphate. It catalyses the reaction L-histidyl-[protein] + UTP = N(tele)-(5'-uridylyl)-L-histidyl-[protein] + diphosphate. The enzyme catalyses L-seryl-[protein] + UTP = O-(5'-uridylyl)-L-seryl-[protein] + diphosphate. The catalysed reaction is L-tyrosyl-[protein] + UTP = O-(5'-uridylyl)-L-tyrosyl-[protein] + diphosphate. In terms of biological role, nucleotidyltransferase involved in the post-translational modification of proteins. It can catalyze the addition of adenosine monophosphate (AMP) or uridine monophosphate (UMP) to a protein, resulting in modifications known as AMPylation and UMPylation. This is Protein nucleotidyltransferase YdiU from Pseudomonas putida (strain ATCC 700007 / DSM 6899 / JCM 31910 / BCRC 17059 / LMG 24140 / F1).